Here is a 383-residue protein sequence, read N- to C-terminus: Acetylornithine deacetylase (383 aa).

Histidine 80 lines the Zn(2+) pocket. The active site involves aspartate 82. Aspartate 112 serves as a coordination point for Zn(2+). Glutamate 144 is a catalytic residue. Zn(2+)-binding residues include glutamate 145, glutamate 169, and histidine 355.

It belongs to the peptidase M20A family. ArgE subfamily. In terms of assembly, homodimer. The cofactor is Zn(2+). Co(2+) serves as cofactor. Glutathione is required as a cofactor.

Its subcellular location is the cytoplasm. It carries out the reaction N(2)-acetyl-L-ornithine + H2O = L-ornithine + acetate. The protein operates within amino-acid biosynthesis; L-arginine biosynthesis; L-ornithine from N(2)-acetyl-L-ornithine (linear): step 1/1. Functionally, catalyzes the hydrolysis of the amide bond of N(2)-acetylated L-amino acids. Cleaves the acetyl group from N-acetyl-L-ornithine to form L-ornithine, an intermediate in L-arginine biosynthesis pathway, and a branchpoint in the synthesis of polyamines. In Escherichia coli O8 (strain IAI1), this protein is Acetylornithine deacetylase.